The primary structure comprises 63 residues: Ferredoxin (63 aa).

A 4Fe-4S ferredoxin-type domain is found at 3 to 31 (WKVSVDVDTCIGDAICASLCPDVFEMGDD). Positions 12, 15, and 18 each coordinate [4Fe-4S] cluster. A disulfide bond links Cys22 and Cys45. Cys53 is a binding site for [4Fe-4S] cluster.

[4Fe-4S] cluster serves as cofactor. [3Fe-4S] cluster is required as a cofactor.

In terms of biological role, ferredoxins are iron-sulfur proteins that transfer electrons in a wide variety of metabolic reactions. The sequence is that of Ferredoxin (fdxA) from Thermococcus kodakarensis (strain ATCC BAA-918 / JCM 12380 / KOD1) (Pyrococcus kodakaraensis (strain KOD1)).